We begin with the raw amino-acid sequence, 485 residues long: Solute carrier family 35 member F4 (485 aa).

2 stretches are compositionally biased toward polar residues: residues 32–42 (SQKSTTRSSVT) and 50–64 (CPSS…LSPL). Disordered stretches follow at residues 32 to 64 (SQKS…LSPL) and 78 to 111 (QSRG…SSQE). The span at 88-98 (RRVERQSRSGD) shows a compositional bias: basic and acidic residues. The span at 99-111 (DGTQTRPESSSQE) shows a compositional bias: polar residues. The next 10 membrane-spanning stretches (helical) occupy residues 129-149 (IWGL…TQIV), 156-176 (FYCP…FFPV), 217-234 (APFS…LLAL), 241-261 (DVSA…WIVL), 265-285 (FMGV…MMAY), 294-314 (IIGV…KVLF), 329-349 (FVST…IILY), 359-381 (FAAL…NILV), 383-405 (VGVV…PGNA), and 414-434 (VIFN…FLLM). Residues 225 to 285 (LTNYLYLLAL…AITGIVMMAY (61 aa)) form the EamA domain.

This sequence belongs to the SLC35F solute transporter family.

It localises to the membrane. In terms of biological role, putative solute transporter. This chain is Solute carrier family 35 member F4 (Slc35f4), found in Mus musculus (Mouse).